The following is a 706-amino-acid chain: F-box/WD repeat-containing protein 7 (706 aa).

Residues 1 to 157 (MNQELLSVGS…IVDLPIHQRS (157 aa)) form a disordered region. Ser-26 carries the phosphoserine modification. Residues 32–54 (QMNRVLEEEQQQPRHQEEEHAAR) are compositionally biased toward basic and acidic residues. Over residues 69-83 (NDPQQGQLEENNNRF) the composition is skewed to polar residues. The span at 86-128 (VDEDSSGNQEEQEEDEEHAGEQDEEDEEEEEMDQESDDFDQSD) shows a compositional bias: acidic residues. Basic and acidic residues predominate over residues 129 to 138 (DSSREDEHTH). Position 204 is a phosphothreonine (Thr-204). Ser-226 carries the phosphoserine modification. An F-box domain is found at 277 to 323 (RDFISLLPKELALYVLSFLEPKDLLQAAQTCRYWRILAEDNLLWREK). WD repeat units follow at residues 377-417 (GHDD…RTLV), 419-455 (HTGG…CIHT), 458-497 (GHTS…HVLM), 499-535 (HVAA…CLHT), 538-577 (GHTN…HTLT), 579-617 (HQSL…QTLQ), and 621-658 (KHQS…FIRN).

As to quaternary structure, homodimer; homodimerization plays a role in substrate binding and/or ubiquitination and degradation. Component of the SCF(FBXW7) complex consisting of CUL1, RBX1, SKP1 and FBXW7. Interacts (via F-box domain) with SKP1. Interacts (via F-box domain) with pseudophosphatase STYX; the interaction is direct and prevents FBXW7 interaction with SKP1. Interacts with cyclin-E (CCNE1 or CCNE2). Interacts with PSEN1. Forms a trimeric complex with NOTCH1 and SGK1. Interacts with NOTCH1 intracellular domain/NICD and NOTCH4 intracellular domain/NICD. Interacts with NOTCH2 intracellular domain (N2ICD). Interacts with MYC (when phosphorylated). Interacts with USP28, counteracting ubiquitination of MYC. Interacts with JUN. Found in a complex with JUN and PRR7. Interacts with JUN and PRR7; the interaction inhibits ubiquitination-mediated JUN degradation, promoting its phosphorylation and transcriptional activity. Interacts (when phosphorylated at Thr-204) with PIN1, disrupting FBXW7 dimerization and promoting FBXW7 autoubiquitination and degradation. Interacts with UBE2QL1. Interacts with FAM83D; promotes FBXW7 degradation. Interacts with MYCN; FBXW7 competes with AURKA for binding to unphosphorylated MYCN but not for binding to phosphorylated MYCN. Interacts with STOML1. Interacts with NFE2L1. Interacts with USP36, counteracting ubiquitination of MYC. Interacts with RICTOR; mediates RICTOR ubiquitination and degradation.l Interacts with USP38, counteracting ubiquitination of MYC. (Microbial infection) In case of infection, interacts with T.annulata PIN1 (TaPIN1); leading to FBXW7 autoubiquitination and subsequent degradation: FBXW7 degradation promotes stabilization of JUN, which promotes cell transformation. Post-translationally, phosphorylation at Thr-204 promotes interaction with PIN1, leading to disrupt FBXW7 dimerization and promoting FBXW7 autoubiquitination and degradation. Phosphorylated by ATM at Ser-26 in response to DNA damage, promoting recruitment to DNA damage sites and 'Lys-63'-linked ubiquitination of phosphorylated XRCC4. Ubiquitinated: autoubiquitinates following phosphorylation at Thr-204 and subsequent interaction with PIN1. Ubiquitination leads to its degradation.

Its subcellular location is the nucleus. The protein resides in the nucleoplasm. It localises to the chromosome. The protein operates within protein modification; protein ubiquitination. Its function is as follows. Substrate recognition component of a SCF (SKP1-CUL1-F-box protein) E3 ubiquitin-protein ligase complex which mediates the ubiquitination and subsequent proteasomal degradation of target proteins. Recognizes and binds phosphorylated sites/phosphodegrons within target proteins and thereafter brings them to the SCF complex for ubiquitination. Identified substrates include cyclin-E (CCNE1 or CCNE2), DISC1, JUN, MYC, NOTCH1 released notch intracellular domain (NICD), NOTCH2, MCL1, MLST8, RICTOR, and probably PSEN1. Acts as a negative regulator of JNK signaling by binding to phosphorylated JUN and promoting its ubiquitination and subsequent degradation. SCF(FBXW7) complex mediates the ubiquitination and subsequent degradation of NFE2L1. Involved in bone homeostasis and negative regulation of osteoclast differentiation. Also able to promote 'Lys-63'-linked ubiquitination in response to DNA damage. The SCF(FBXW7) complex facilitates double-strand break repair following phosphorylation by ATM: phosphorylation promotes localization to sites of double-strand breaks and 'Lys-63'-linked ubiquitination of phosphorylated XRCC4, enhancing DNA non-homologous end joining. In Bos taurus (Bovine), this protein is F-box/WD repeat-containing protein 7.